A 142-amino-acid chain; its full sequence is Transcriptional regulator MraZ (142 aa).

SpoVT-AbrB domains lie at 5–47 and 76–119; these read EYQH…TINE and ACIV…SREK.

It belongs to the MraZ family. In terms of assembly, forms oligomers.

The protein localises to the cytoplasm. Its subcellular location is the nucleoid. The polypeptide is Transcriptional regulator MraZ (Clostridium botulinum (strain Eklund 17B / Type B)).